The sequence spans 659 residues: MAMESECNVVELIGGFFLKATLLVCQPRTGAIEGDGEEDRTFNISSAADAGVAEAVRAWTAYDGAQELPPLVIEMFLDLRRLGPQHTVVLKDQDGNPWNVCKGGKKSEIMLERWLVELDVGNEEARPEEPPNAAEIYKQLVLLFRYLYTLTQLLPANELYARLHGPSNQGEAAMPLINIGTRILDGSKPILSKGRVGLSRSIIATYTNVINETNVASHLEQKKITPISTGYGSLRITVSYRRDCNFDVNEVLDYEGNNCSSSSVVDTHTKPGVGPLSSLRRVSIHSNRSMSISPQTVYSGTVIPDPSPQRKSSSSRIQPFKAGSVGSGSLAIARNPSGSSAVATLRAQRSGSASISTHVADQAVGEPSSVGSGGSKYSSSFGKIRRQSSMRRSGSLELPAAKQAKPGERGSDELLDFVKMLEEKQELNVKKLYGTTTDISSSLVRFQSMKSNNDTLSEDLSMSYSLEPTHAPQVRYRSNSHSPIPSISPSVQYTSIPMRLSQSRNVSQTELASRKNSAERLKTLISSRTGSFSESRRQSNAGQEDILEDEDDEAEEILLSKSHLSNPTGTRLQSMSPQSLKSISSYNRAAVPFKPVSNFSCPTTMATPAHAKLHKASISSSPDNQSGLVKKDHEHSTMTGGDDDDDLLFFMSDMNLSSQ.

Disordered stretches follow at residues 260–280, 295–320, 353–409, 525–551, 560–579, and 612–644; these read SSSSVVDTHTKPGVGPLSSLR, QTVYSGTVIPDPSPQRKSSSSRIQPF, ASIS…PGER, ISSRTGSFSESRRQSNAGQEDILEDED, SKSHLSNPTGTRLQSMSPQS, and KLHKASISSSPDNQSGLVKKDHEHSTMTGGDDD. Over residues 364–382 the composition is skewed to low complexity; it reads VGEPSSVGSGGSKYSSSFG. Composition is skewed to polar residues over residues 525 to 542, 562 to 579, and 617 to 627; these read ISSRTGSFSESRRQSNAG, SHLSNPTGTRLQSMSPQS, and SISSSPDNQSG.

Belongs to the ATG13 family. Fungi subfamily. In terms of assembly, interacts with ATG1 to form the ATG1-ATG13 kinase complex.

It localises to the cytoplasm. The protein localises to the preautophagosomal structure. In terms of biological role, activates the ATG1 kinase in a nutritional condition dependent manner through the TOR pathway, leading to autophagy. Also involved in cytoplasm to vacuole transport (Cvt) and more specifically in Cvt vesicle formation. Seems to play a role in the switching machinery regulating the conversion between the Cvt pathway and autophagy. Finally, ATG13 is also required for glycogen storage during stationary phase. In Eremothecium gossypii (strain ATCC 10895 / CBS 109.51 / FGSC 9923 / NRRL Y-1056) (Yeast), this protein is Autophagy-related protein 13 (ATG13).